The chain runs to 225 residues: MGRGKIEIKRIENTTNRQVTFCKRRNGLLKKAYELSVLCDAEVALIVFSSRGRLYEYANNSVRTTIERYKKVCSDSSNTGSVSEANAQFYQQEASKLRRQIRDIQNLNRHILGEALSSLNFKELKNLETRLEKGISRIRSKKNELLFAEIEYMQKREIELQNSNLFLRAQIAENERAQQQMNLMPGSQYESVPQQPYDSQNLLPVNLLDPNHHYSRHDQTALQLV.

Expressed in flowers and seeds.

It is found in the nucleus. In terms of biological role, probable transcription factor involved in flower development. This chain is Agamous-like MADS-box protein MADS1, found in Vitis vinifera (Grape).